The following is a 103-amino-acid chain: Small ribosomal subunit protein uS10 (103 aa).

This sequence belongs to the universal ribosomal protein uS10 family. In terms of assembly, part of the 30S ribosomal subunit.

Its function is as follows. Involved in the binding of tRNA to the ribosomes. In Acinetobacter baylyi (strain ATCC 33305 / BD413 / ADP1), this protein is Small ribosomal subunit protein uS10.